We begin with the raw amino-acid sequence, 440 residues long: 23S rRNA (uracil(1939)-C(5))-methyltransferase RlmD (440 aa).

A TRAM domain is found at 8-69 (PQKINKLQRE…RQFGLATTKK (62 aa)). [4Fe-4S] cluster is bound by residues cysteine 82, cysteine 88, cysteine 91, and cysteine 169. The S-adenosyl-L-methionine site is built by glutamine 272, phenylalanine 301, asparagine 306, glutamate 322, aspartate 349, and aspartate 370. The active-site Nucleophile is cysteine 396.

It belongs to the class I-like SAM-binding methyltransferase superfamily. RNA M5U methyltransferase family. RlmD subfamily.

The enzyme catalyses uridine(1939) in 23S rRNA + S-adenosyl-L-methionine = 5-methyluridine(1939) in 23S rRNA + S-adenosyl-L-homocysteine + H(+). Catalyzes the formation of 5-methyl-uridine at position 1939 (m5U1939) in 23S rRNA. In Mannheimia succiniciproducens (strain KCTC 0769BP / MBEL55E), this protein is 23S rRNA (uracil(1939)-C(5))-methyltransferase RlmD.